Here is a 278-residue protein sequence, read N- to C-terminus: Octanoyltransferase LipM (278 aa).

Positions 33–248 constitute a BPL/LPL catalytic domain; the sequence is KKMPPTIRFY…GFEKGLDVEL (216 aa). The active-site Acyl-thioester intermediate is the Cys-150.

The protein belongs to the octanoyltransferase LipM family. As to quaternary structure, monomer.

It carries out the reaction octanoyl-[ACP] + L-lysyl-[protein] = N(6)-octanoyl-L-lysyl-[protein] + holo-[ACP] + H(+). It participates in protein modification; protein lipoylation via endogenous pathway; protein N(6)-(lipoyl)lysine from octanoyl-[acyl-carrier-protein]. In terms of biological role, catalyzes the transfer of endogenously produced octanoic acid from octanoyl-acyl-carrier-protein onto the lipoyl domain of GcvH, an intermediate carrier during protein lipoylation. The protein is Octanoyltransferase LipM of Bacillus cereus (strain ATCC 14579 / DSM 31 / CCUG 7414 / JCM 2152 / NBRC 15305 / NCIMB 9373 / NCTC 2599 / NRRL B-3711).